The following is a 183-amino-acid chain: NEDD8-conjugating enzyme Ubc12 (183 aa).

Position 1 is an N-acetylmethionine (Met1). The disordered stretch occupies residues 1–28 (MIKLFSLKQQKKEEESAGGTKGSSKKAS). The UBC core domain maps to 29–173 (AAQLRIQKDI…VQRSMRGGYI (145 aa)). Cys111 (glycyl thioester intermediate) is an active-site residue.

It belongs to the ubiquitin-conjugating enzyme family. UBC12 subfamily. In terms of processing, the acetylation of Met-1 increases affinity for DCUN1D1 by about 2 orders of magnitude and is crucial for NEDD8 transfer to cullins.

The enzyme catalyses [E1 NEDD8-activating enzyme]-S-[NEDD8 protein]-yl-L-cysteine + [E2 NEDD8-conjugating enzyme]-L-cysteine = [E1 NEDD8-activating enzyme]-L-cysteine + [E2 NEDD8-conjugating enzyme]-S-[NEDD8-protein]-yl-L-cysteine.. It participates in protein modification; protein neddylation. Its function is as follows. Accepts the ubiquitin-like protein NEDD8 from the UBA3-NAE1 E1 complex and catalyzes its covalent attachment to other proteins. The specific interaction with the E3 ubiquitin ligase rbx1, but not rbx2, suggests that the rbx1-ube2m complex neddylates specific target proteins, such as cul1, cul2, cul3 and cul4. Involved in cell proliferation. The sequence is that of NEDD8-conjugating enzyme Ubc12 (ube2m) from Xenopus tropicalis (Western clawed frog).